The following is a 145-amino-acid chain: Large ribosomal subunit protein uL11 (145 aa).

This sequence belongs to the universal ribosomal protein uL11 family. As to quaternary structure, part of the ribosomal stalk of the 50S ribosomal subunit. Interacts with L10 and the large rRNA to form the base of the stalk. L10 forms an elongated spine to which L12 dimers bind in a sequential fashion forming a multimeric L10(L12)X complex. Post-translationally, one or more lysine residues are methylated.

Functionally, forms part of the ribosomal stalk which helps the ribosome interact with GTP-bound translation factors. This is Large ribosomal subunit protein uL11 from Porphyromonas gingivalis (strain ATCC 33277 / DSM 20709 / CIP 103683 / JCM 12257 / NCTC 11834 / 2561).